A 298-amino-acid chain; its full sequence is HTH-type transcriptional regulator CzcR (298 aa).

Positions 11-68 (MELRDLQIFQSVADQGSVSSAAKELNYVQSNVTARIKQLENELKTPLFYRHKRGMTLT) constitute an HTH lysR-type domain. Residues 28 to 47 (VSSAAKELNYVQSNVTARIK) constitute a DNA-binding region (H-T-H motif).

It belongs to the LysR transcriptional regulatory family.

In Bacillus thuringiensis (strain Al Hakam), this protein is HTH-type transcriptional regulator CzcR (czcR).